The primary structure comprises 484 residues: GDP-mannose transporter (484 aa).

2 stretches are compositionally biased toward basic and acidic residues: residues 1-12 (MSMTTSRERNVP) and 19-28 (ELGRSRHSDV). A disordered region spans residues 1 to 34 (MSMTTSRERNVPPDDNEIELGRSRHSDVAPESES). Residues 1–60 (MSMTTSRERNVPPDDNEIELGRSRHSDVAPESESPQAHLLNSDVASVTKNFMRNASHATA) are Cytoplasmic-facing. A helical membrane pass occupies residues 61–81 (NSGAIAAVLSYCIASISMTVI). Residues 82–90 (NKFTVSGEK) lie on the Lumenal side of the membrane. A helical transmembrane segment spans residues 91–111 (FTMNLLVLLCQCSVGVAMVYA). Topologically, residues 112 to 129 (AKCMGWIQIRTLNMRDVK) are cytoplasmic. A helical transmembrane segment spans residues 130–150 (TWFPISTMLVFVIYTGSKALQ). Residues 151–155 (HMDIP) are Lumenal-facing. Residues 156–176 (IYTIFKNLTIILIAYGELLWF) traverse the membrane as a helical segment. Topologically, residues 177–179 (NGR) are cytoplasmic. A helical transmembrane segment spans residues 180–200 (ITPMVFLSFILMVLSSIIAAW). At 201–287 (PDLAPSTAKT…ASSSTLSSWS (87 aa)) the chain is on the lumenal side. A helical membrane pass occupies residues 288–308 (TNGYVWMLANCMISATYVLVM). Topologically, residues 309-321 (RKRIKLTGFKDWD) are cytoplasmic. The helical transmembrane segment at 322–342 (TMFYNNLLSIPVLLFMSLLVE) threads the bilayer. The N-linked (GlcNAc...) asparagine glycan is linked to N343. The Lumenal segment spans residues 343 to 360 (NWSVETFEHNFPREKRST). The helical transmembrane segment at 361–381 (LVFAILLSGTGGVFISYTTAW) threads the bilayer. Over 382 to 390 (CIRVTSSTT) the chain is Cytoplasmic. Residues 391-411 (YSMVGALNKLPLALSGMLFFG) form a helical membrane-spanning segment. The Lumenal portion of the chain corresponds to 412–413 (NP). Residues 414-434 (VTPYNSIGVAVGFIAGIVYAV) form a helical membrane-spanning segment. The Cytoplasmic portion of the chain corresponds to 435–484 (GKYKQVVAARIANSDATGASTSLSSSSSAAPSGEYVFDLKGEIPTHTRQQ).

It belongs to the TPT transporter family. SLC35D subfamily. As to quaternary structure, homooligomer.

It localises to the golgi apparatus membrane. The protein resides in the cytoplasmic vesicle membrane. Its subcellular location is the endoplasmic reticulum membrane. In terms of biological role, involved in the import of GDP-mannose from the cytoplasm into the Golgi lumen. The sequence is that of GDP-mannose transporter (VRG4) from Malassezia globosa (strain ATCC MYA-4612 / CBS 7966) (Dandruff-associated fungus).